A 345-amino-acid chain; its full sequence is 3-dehydroquinate synthase (345 aa).

It belongs to the archaeal-type DHQ synthase family.

It carries out the reaction 2-amino-2,3,7-trideoxy-D-lyxo-hept-6-ulosonate + NAD(+) + H2O = 3-dehydroquinate + NH4(+) + NADH + H(+). In terms of biological role, catalyzes the oxidative deamination and cyclization of 2-amino-3,7-dideoxy-D-threo-hept-6-ulosonic acid (ADH) to yield 3-dehydroquinate (DHQ), which is fed into the canonical shikimic pathway of aromatic amino acid biosynthesis. This Methanocorpusculum labreanum (strain ATCC 43576 / DSM 4855 / Z) protein is 3-dehydroquinate synthase.